The sequence spans 222 residues: Cytidylate kinase (222 aa).

Residue 11-19 (GPAGAGKST) coordinates ATP.

It belongs to the cytidylate kinase family. Type 1 subfamily.

It is found in the cytoplasm. It catalyses the reaction CMP + ATP = CDP + ADP. The enzyme catalyses dCMP + ATP = dCDP + ADP. This Desulforamulus reducens (strain ATCC BAA-1160 / DSM 100696 / MI-1) (Desulfotomaculum reducens) protein is Cytidylate kinase.